Here is a 601-residue protein sequence, read N- to C-terminus: MKSDLAIVILAAGRGTRMRSSTPKVLHNIAGLPMVAHVLRGAQLLKPCKTIVVFRDVRVEQYIRNTFPDVLTVAQSDALYGTGFGVFSAIPWIRSESYGNTYPNTRHESHAEYELDACDLDTCNPASDRLNDQESLKGGRHIHTKSGDVTNNKPFPSRVLILYADVPLVPFQLLEELVRKPLKQAVGAIVTTHLDNPKGYGRVMRDNLGSIAKIIEDSNILPEQSINEVNTGVGIFDTEYLQDALNKLLKCHIAHSPNQDCVTNQDCVTNQDCVTNQDCVTNQDCVTNQDCVPAAHTEAHVLSPKVIVTEQIHKKAESEHQHAGQWMCRQDTVGAQNTKEEMRLTDIVEYFYNNGLRVNSITTSDSELLLGVNNRVQLAKTEKILNDQIIKRWQLYGVTIKSPETTWIDSTVQLSEDVLILPGCILSGRTRIEEGAVIGPFATISDSFIGKNTIVKRAEIIDARIEEGAVIGPFAFIRPGTVIGKDSKVGTFVEIKQSNIGPESKVPHLSYIGDANIGSHVNIGAGNIFANYDGKLKHETCIDDGVKTGAGNVFVAPVKVGRGAYTGAGSVIRDDIEEGALSLTELKQKTIPKWAENRGDG.

The tract at residues 1–375 is pyrophosphorylase; sequence MKSDLAIVIL…SELLLGVNNR (375 aa). Residues 10–13, K24, Q75, and 81–82 each bind UDP-N-acetyl-alpha-D-glucosamine; these read LAAG and GT. D165 is a Mg(2+) binding site. UDP-N-acetyl-alpha-D-glucosamine is bound by residues G201, E216, N230, and N373. N373 serves as a coordination point for Mg(2+). Positions 376 to 396 are linker; sequence VQLAKTEKILNDQIIKRWQLY. Residues 397–601 form an N-acetyltransferase region; sequence GVTIKSPETT…PKWAENRGDG (205 aa). The UDP-N-acetyl-alpha-D-glucosamine site is built by R478 and K496. H508 (proton acceptor) is an active-site residue. Residues Y511 and N522 each contribute to the UDP-N-acetyl-alpha-D-glucosamine site. Acetyl-CoA contacts are provided by residues A525, 531 to 532, and A568; that span reads NY.

The protein in the N-terminal section; belongs to the N-acetylglucosamine-1-phosphate uridyltransferase family. It in the C-terminal section; belongs to the transferase hexapeptide repeat family. Homotrimer. Requires Mg(2+) as cofactor.

It localises to the cytoplasm. It carries out the reaction alpha-D-glucosamine 1-phosphate + acetyl-CoA = N-acetyl-alpha-D-glucosamine 1-phosphate + CoA + H(+). The catalysed reaction is N-acetyl-alpha-D-glucosamine 1-phosphate + UTP + H(+) = UDP-N-acetyl-alpha-D-glucosamine + diphosphate. Its pathway is nucleotide-sugar biosynthesis; UDP-N-acetyl-alpha-D-glucosamine biosynthesis; N-acetyl-alpha-D-glucosamine 1-phosphate from alpha-D-glucosamine 6-phosphate (route II): step 2/2. It participates in nucleotide-sugar biosynthesis; UDP-N-acetyl-alpha-D-glucosamine biosynthesis; UDP-N-acetyl-alpha-D-glucosamine from N-acetyl-alpha-D-glucosamine 1-phosphate: step 1/1. It functions in the pathway bacterial outer membrane biogenesis; LPS lipid A biosynthesis. Its function is as follows. Catalyzes the last two sequential reactions in the de novo biosynthetic pathway for UDP-N-acetylglucosamine (UDP-GlcNAc). The C-terminal domain catalyzes the transfer of acetyl group from acetyl coenzyme A to glucosamine-1-phosphate (GlcN-1-P) to produce N-acetylglucosamine-1-phosphate (GlcNAc-1-P), which is converted into UDP-GlcNAc by the transfer of uridine 5-monophosphate (from uridine 5-triphosphate), a reaction catalyzed by the N-terminal domain. In Tropheryma whipplei (strain TW08/27) (Whipple's bacillus), this protein is Bifunctional protein GlmU.